The primary structure comprises 541 residues: Chaperonin GroEL 2 (541 aa).

Residues 29-32, 86-90, Gly413, 478-480, and Asp494 each bind ATP; these read TLGP, DGTTT, and NAA.

It belongs to the chaperonin (HSP60) family. As to quaternary structure, forms a cylinder of 14 subunits composed of two heptameric rings stacked back-to-back. Interacts with the co-chaperonin GroES.

The protein resides in the cytoplasm. It catalyses the reaction ATP + H2O + a folded polypeptide = ADP + phosphate + an unfolded polypeptide.. Its function is as follows. Together with its co-chaperonin GroES, plays an essential role in assisting protein folding. The GroEL-GroES system forms a nano-cage that allows encapsulation of the non-native substrate proteins and provides a physical environment optimized to promote and accelerate protein folding. The chain is Chaperonin GroEL 2 from Corynebacterium jeikeium (strain K411).